We begin with the raw amino-acid sequence, 304 residues long: N-acetyl-D-glucosamine kinase (304 aa).

Residues 4–11 (GFDMGGTK) and 133–140 (GVGGGLIV) contribute to the ATP site. Zn(2+) is bound by residues His157, Cys177, Cys179, and Cys184.

This sequence belongs to the ROK (NagC/XylR) family. NagK subfamily.

The catalysed reaction is N-acetyl-D-glucosamine + ATP = N-acetyl-D-glucosamine 6-phosphate + ADP + H(+). The protein operates within cell wall biogenesis; peptidoglycan recycling. Its function is as follows. Catalyzes the phosphorylation of N-acetyl-D-glucosamine (GlcNAc) derived from cell-wall degradation, yielding GlcNAc-6-P. The polypeptide is N-acetyl-D-glucosamine kinase (Yersinia pseudotuberculosis serotype O:3 (strain YPIII)).